The chain runs to 422 residues: L-threonine dehydratase biosynthetic IlvA (422 aa).

Lysine 56 bears the N6-(pyridoxal phosphate)lysine mark. Pyridoxal 5'-phosphate is bound by residues asparagine 83, 189–193 (GGGGL), and serine 315. The ACT-like domain occupies 339–413 (HYFILNFPQR…FDKSNIYINE (75 aa)).

Belongs to the serine/threonine dehydratase family. As to quaternary structure, homotetramer. The cofactor is pyridoxal 5'-phosphate.

It carries out the reaction L-threonine = 2-oxobutanoate + NH4(+). The protein operates within amino-acid biosynthesis; L-isoleucine biosynthesis; 2-oxobutanoate from L-threonine: step 1/1. Catalyzes the anaerobic formation of alpha-ketobutyrate and ammonia from threonine in a two-step reaction. The first step involved a dehydration of threonine and a production of enamine intermediates (aminocrotonate), which tautomerizes to its imine form (iminobutyrate). Both intermediates are unstable and short-lived. The second step is the nonenzymatic hydrolysis of the enamine/imine intermediates to form 2-ketobutyrate and free ammonia. In the low water environment of the cell, the second step is accelerated by RidA. This is L-threonine dehydratase biosynthetic IlvA (ilvA) from Staphylococcus saprophyticus subsp. saprophyticus (strain ATCC 15305 / DSM 20229 / NCIMB 8711 / NCTC 7292 / S-41).